Consider the following 303-residue polypeptide: Zinc transporter ZIP9-B (303 aa).

A helical membrane pass occupies residues 7-27 (ISLLSLAMLVGCYVSGIIPLA). N29 carries N-linked (GlcNAc...) asparagine glycosylation. The next 5 membrane-spanning stretches (helical) occupy residues 35 to 55 (LKLV…AVIV), 102 to 122 (AYIG…DQIG), 142 to 162 (ITTT…LGAA), 172 to 192 (LIVF…LVSF), and 206 to 226 (HLLV…LGLS). N237 carries N-linked (GlcNAc...) asparagine glycosylation. The next 2 helical transmembrane spans lie at 240–260 (GVAM…HVLP) and 282–302 (LEVC…IGHQ).

This sequence belongs to the ZIP transporter (TC 2.A.5) family.

The protein localises to the golgi apparatus. It is found in the trans-Golgi network membrane. It localises to the cell membrane. The protein resides in the cytoplasm. Its subcellular location is the perinuclear region. The protein localises to the mitochondrion. It is found in the nucleus. The enzyme catalyses Zn(2+)(in) = Zn(2+)(out). Transports zinc ions across cell and organelle membranes into the cytoplasm and regulates intracellular zinc homeostasis. Participates in the zinc ions efflux out of the secretory compartments. Regulates intracellular zinc level, resulting in the enhancement of AKT1 and MAPK3/MAPK1 (Erk1/2) phosphorylation in response to the BCR activation. Also functions as a membrane androgen receptor that mediates, through a G protein, the non-classical androgen signaling pathway, characterized by the activation of MAPK3/MAPK1 (Erk1/2) and transcription factors CREB1 or ATF1. Moreover, has dual functions as a membrane-bound androgen receptor and as an androgen-dependent zinc transporter both of which are mediated through an inhibitory G protein (Gi) that mediates both MAP kinase and zinc signaling leading to the androgen-dependent apoptotic process. The polypeptide is Zinc transporter ZIP9-B (slc39a9-b) (Xenopus laevis (African clawed frog)).